A 301-amino-acid chain; its full sequence is Probable porphobilinogen deaminase (301 aa).

C241 carries the S-(dipyrrolylmethanemethyl)cysteine modification.

The protein belongs to the HMBS family. Dipyrromethane serves as cofactor.

It catalyses the reaction 4 porphobilinogen + H2O = hydroxymethylbilane + 4 NH4(+). The protein operates within porphyrin-containing compound metabolism; protoporphyrin-IX biosynthesis; coproporphyrinogen-III from 5-aminolevulinate: step 2/4. Its function is as follows. Tetrapolymerization of the monopyrrole PBG into the hydroxymethylbilane pre-uroporphyrinogen in several discrete steps. The chain is Probable porphobilinogen deaminase from Pyrobaculum islandicum (strain DSM 4184 / JCM 9189 / GEO3).